The primary structure comprises 352 residues: C-X-C chemokine receptor type 4 (352 aa).

The tract at residues 1 to 21 (MEGISIYTSDNYTEEIGSGDY) is important for chemokine binding and signaling. Residues 1 to 38 (MEGISIYTSDNYTEEIGSGDYDSIKEPCFREENAHFNR) are Extracellular-facing. At Y7 the chain carries Sulfotyrosine. Residue N11 is glycosylated (N-linked (GlcNAc...) asparagine). Y12 is modified (sulfotyrosine). O-linked (Xyl...) (chondroitin sulfate) serine glycosylation is present at S18. A Sulfotyrosine modification is found at Y21. Cystine bridges form between C28-C274 and C109-C186. A helical transmembrane segment spans residues 39–63 (IFLPTIYSIIFLTGIVGNGLVILVM). At 64–77 (GYQKKLRSMTDKYR) the chain is on the cytoplasmic side. The helical transmembrane segment at 78 to 99 (LHLSVADLLFVITLPFWAVDAV) threads the bilayer. The interval 94-97 (WAVD) is chemokine binding. The Extracellular segment spans residues 100–110 (ANWYFGKFLCK). Residues 111-130 (AVHVIYTVNLYSSVLILAFI) form a helical membrane-spanning segment. The interval 113-117 (HVIYT) is chemokine binding. Residues 131 to 154 (SLDRYLAIVHATNSQRPRKLLAEK) lie on the Cytoplasmic side of the membrane. An Important for signaling motif is present at residues 133–135 (DRY). Residues 135 to 147 (YLAIVHATNSQRP) form an involved in dimerization; when bound to chemokine region. Residues 155-174 (VVYVGVWIPALLLTIPDFIF) form a helical membrane-spanning segment. At 175-195 (ANVSEADDRYICDRFYPNDLW) the chain is on the extracellular side. Positions 186–190 (CDRFY) are chemokine binding, important for signaling. The interval 191–210 (PNDLWVVVFQFQHIMVGLIL) is involved in dimerization. Residues 196–216 (VVVFQFQHIMVGLILPGIVIL) traverse the membrane as a helical segment. Topologically, residues 217–241 (SCYCIIISKLSHSKGHQKRKALKTT) are cytoplasmic. The chain crosses the membrane as a helical span at residues 242–261 (VILILAFFACWLPYYIGISI). At 262–282 (DSFILLEIIRQGCEFENTVHK) the chain is on the extracellular side. The involved in dimerization stretch occupies residues 266-268 (LLE). Residues 283 to 302 (WISITEALAFFHCCLNPILY) form a helical membrane-spanning segment. Over 303 to 352 (AFLGAKFKTSAQHALTSVSRGSSLKILSKGKRGGHSSVSTESESSSFHSS) the chain is Cytoplasmic. Phosphoserine is present on residues S319 and S321. Phosphoserine; by PKC and GRK6 occurs at positions 324 and 325. The tract at residues 329-352 (LSKGKRGGHSSVSTESESSSFHSS) is disordered. S330 is subject to Phosphoserine; by GRK6. A Glycyl lysine isopeptide (Lys-Gly) (interchain with G-Cter in ubiquitin) cross-link involves residue K331. Positions 337–352 (HSSVSTESESSSFHSS) are enriched in low complexity. Phosphoserine; by GRK6 is present on S339. Phosphoserine is present on residues S348 and S351.

The protein belongs to the G-protein coupled receptor 1 family. As to quaternary structure, monomer. Can form homodimers. Interacts with CD164. Interacts with ARRB2; the interaction is dependent on the C-terminal phosphorylation of CXCR4 and allows activation of MAPK1 and MAPK3. Interacts with ARR3; the interaction is dependent on the C-terminal phosphorylation of CXCR4 and modulates calcium mobilization. Interacts with RNF113A; the interaction, enhanced by CXCL12, promotes CXCR4 ubiquitination and subsequent degradation. Interacts (via the cytoplasmic C-terminal) with ITCH (via the WW domains I and II); the interaction, enhanced by CXCL12, promotes CXCR4 ubiquitination and leads to its degradation. Interacts with extracellular ubiquitin. Interacts with DBN1; this interaction is enhanced by antigenic stimulation. Following LPS binding, may form a complex with GDF5, HSP90AA1 and HSPA8. In terms of processing, phosphorylated on agonist stimulation. Rapidly phosphorylated on serine and threonine residues in the C-terminal. Phosphorylation at Ser-324 and Ser-325 leads to recruitment of ITCH, ubiquitination and protein degradation. Ubiquitinated after ligand binding, leading to its degradation. Ubiquitinated by ITCH at the cell membrane on agonist stimulation. The ubiquitin-dependent mechanism, endosomal sorting complex required for transport (ESCRT), then targets CXCR4 for lysosomal degradation. This process is dependent also on prior Ser-/Thr-phosphorylation in the C-terminal of CXCR4. Also binding of ARRB1 to STAM negatively regulates CXCR4 sorting to lysosomes though modulating ubiquitination of SFR5S. Post-translationally, sulfation is required for efficient binding of CXCL12/SDF-1alpha and promotes its dimerization. In terms of processing, O- and N-glycosylated. N-glycosylation can mask coreceptor function. The O-glycosylation chondroitin sulfate attachment does not affect interaction with CXCL12/SDF-1alpha nor its coreceptor activity.

The protein localises to the cell membrane. Its subcellular location is the cell junction. The protein resides in the early endosome. It localises to the late endosome. It is found in the lysosome. Receptor for the C-X-C chemokine CXCL12/SDF-1 that transduces a signal by increasing intracellular calcium ion levels and enhancing MAPK1/MAPK3 activation. Involved in the AKT signaling cascade. Plays a role in regulation of cell migration, e.g. during wound healing. Acts as a receptor for extracellular ubiquitin; leading to enhanced intracellular calcium ions and reduced cellular cAMP levels. Binds bacterial lipopolysaccharide (LPS) et mediates LPS-induced inflammatory response, including TNF secretion by monocytes. Involved in hematopoiesis and in cardiac ventricular septum formation. Also plays an essential role in vascularization of the gastrointestinal tract, probably by regulating vascular branching and/or remodeling processes in endothelial cells. Involved in cerebellar development. In the CNS, could mediate hippocampal-neuron survival. In Callithrix jacchus (White-tufted-ear marmoset), this protein is C-X-C chemokine receptor type 4 (CXCR4).